A 196-amino-acid polypeptide reads, in one-letter code: Phosphoheptose isomerase (196 aa).

In terms of domain architecture, SIS spans 34 to 196 (MVQCLLGGKK…DRTLFPQDEA (163 aa)). Residue 49–51 (NGG) participates in substrate binding. Positions 58 and 62 each coordinate Zn(2+). Substrate-binding positions include glutamate 62, 91–92 (ND), 117–119 (STS), serine 122, and glutamine 172. Zn(2+) contacts are provided by glutamine 172 and histidine 180.

The protein belongs to the SIS family. GmhA subfamily. In terms of assembly, homotetramer. The cofactor is Zn(2+).

Its subcellular location is the cytoplasm. The enzyme catalyses 2 D-sedoheptulose 7-phosphate = D-glycero-alpha-D-manno-heptose 7-phosphate + D-glycero-beta-D-manno-heptose 7-phosphate. The protein operates within carbohydrate biosynthesis; D-glycero-D-manno-heptose 7-phosphate biosynthesis; D-glycero-alpha-D-manno-heptose 7-phosphate and D-glycero-beta-D-manno-heptose 7-phosphate from sedoheptulose 7-phosphate: step 1/1. Its function is as follows. Catalyzes the isomerization of sedoheptulose 7-phosphate in D-glycero-D-manno-heptose 7-phosphate. The chain is Phosphoheptose isomerase from Shewanella denitrificans (strain OS217 / ATCC BAA-1090 / DSM 15013).